A 956-amino-acid polypeptide reads, in one-letter code: UvrABC system protein A (956 aa).

33–40 lines the ATP pocket; it reads GLSGSGKS. A C4-type zinc finger spans residues 252-279; sequence CPYCGFSVGELEPRMFSFNSPFGACPTC. ABC transporter domains are found at residues 309-587 and 607-936; these read WRPI…KNSI and GNGL…KYLK. Residue 639–646 coordinates ATP; the sequence is GVSGSGKS. Residues 738 to 764 form a C4-type zinc finger; sequence CEACKGDGIIKIEMHFLPDVYVPCEVC.

It belongs to the ABC transporter superfamily. UvrA family. In terms of assembly, forms a heterotetramer with UvrB during the search for lesions.

The protein localises to the cytoplasm. Functionally, the UvrABC repair system catalyzes the recognition and processing of DNA lesions. UvrA is an ATPase and a DNA-binding protein. A damage recognition complex composed of 2 UvrA and 2 UvrB subunits scans DNA for abnormalities. When the presence of a lesion has been verified by UvrB, the UvrA molecules dissociate. In Listeria monocytogenes serovar 1/2a (strain ATCC BAA-679 / EGD-e), this protein is UvrABC system protein A.